A 1182-amino-acid polypeptide reads, in one-letter code: Rho GTPase-activating protein 20 (1182 aa).

Residues 1–40 are disordered; sequence MEAMSPQQDALGAQPGRSSSLTGMSRIAGGPGTKKKMKTL. At S46 the chain carries Phosphoserine. One can recognise a PH domain in the interval 86-187; it reads LLIDGPVELK…SLLQRYIALE (102 aa). The Ras-associating domain occupies 194–283; sequence KSIPLKIFAK…TALLTQGSKD (90 aa). In terms of domain architecture, Rho-GAP spans 365–551; that stretch reads VSLPDICEND…FLIENCCRIF (187 aa). A phosphoserine mark is found at S704 and S730. 4 disordered regions span residues 744–791, 932–953, 981–1009, and 1140–1182; these read KQTQ…IQET, ASYS…SSQD, QRKQ…GQAS, and EESG…GDRH. The segment covering 757–775 has biased composition (polar residues); that stretch reads FKQSSVTGTDVSKRNTANE. A compositionally biased stretch (low complexity) spans 933–953; that stretch reads SYSSLSSPGTSPSGSSVSSQD.

Highest expression is found in testis. Ubiquitously expressed in extragonadal tissues.

GTPase activator for the Rho-type GTPases by converting them to an inactive GDP-bound state. This chain is Rho GTPase-activating protein 20 (Arhgap20), found in Rattus norvegicus (Rat).